The following is a 2876-amino-acid chain: Nipped-B-like protein B (2876 aa).

Composition is skewed to polar residues over residues 124-142 and 149-167; these read PQNSMHGSPASNYQQTTIT and YVQTQAGSGSRYMPQQNSP. 4 disordered regions span residues 124 to 197, 246 to 367, 439 to 494, and 525 to 1017; these read PQNS…PIQQ, NDEG…SDAE, RESA…AGNK, and EGPV…FPNY. Positions 276-290 are enriched in pro residues; sequence GPRPPLILQSPPPYT. Positions 439–457 are enriched in basic and acidic residues; the sequence is RESAIERERCSKEVQDKDK. The segment covering 471–480 has biased composition (low complexity); it reads PGAAGTAGAS. Gly residues predominate over residues 481-490; sequence GTPGVGGGCN. Basic and acidic residues-rich tracts occupy residues 556 to 577, 586 to 955, and 962 to 1005; these read SKTDGEVQRTVDGRPEVIKQRV, VDGR…EQRS, and VKQE…HKPQ. The PxVxL motif signature appears at 1068–1081; the sequence is NKGAKPVVVLKKLS. Disordered regions lie at residues 1088–1229 and 1724–1747; these read MISN…EPKL and TEKAMKSQRDDDSSDGPHHAKDVE. A compositionally biased stretch (low complexity) spans 1090-1100; that stretch reads SNSRSSKSSRS. 2 stretches are compositionally biased toward basic and acidic residues: residues 1104 to 1119 and 1156 to 1183; these read RFRETDSRLPLCERVK and KDRDKTWEYEEKDRRGSGDHRRSFDSRR. The segment covering 1212-1223 has biased composition (basic residues); that stretch reads KLKKKEKQKKRK. HEAT repeat units follow at residues 1803–1841, 1879–1917, 1981–2020, 2203–2241, and 2349–2387; these read AQSFDIYLTQILRVLGESAIAVRTKAMKCLSEVVAVDPS, PQLTEQYYDMLIERILDTGISVRKRVIKILRDICLEQPT, YDWFEQLLQNLLKSEEDASYKPARKACAQLVDSLVEHILK, VVIKDKVLELLLYFTKNDDEEVQTKAIIGLGFLFIQDPG, and LIHPVQCVPYLIAMGTDSEPTMRNKADQQLVEIDKKYTG. Disordered regions lie at residues 2516-2590 and 2728-2774; these read EVVK…DSDL and ALLG…GHRN. Residues 2519-2537 show a composition bias toward basic residues; sequence KKKKKKKKKKKQKQKRGKK. Residues 2548–2563 show a composition bias toward low complexity; sequence RSSSSSSSSSSSSSDS. The segment covering 2762 to 2774 has biased composition (basic and acidic residues); the sequence is RTGDSAEASGHRN.

Belongs to the SCC2/Nipped-B family.

Its subcellular location is the nucleus. Its function is as follows. May play a structural role in chromatin. Involved in sister chromatid cohesion, possibly by facilitating the cohesin complex loading. Transcription factor, which may promote cortical neuron migration during brain development by regulating the transcription of crucial genes in this process. This chain is Nipped-B-like protein B (nipblb), found in Danio rerio (Zebrafish).